Here is a 350-residue protein sequence, read N- to C-terminus: Histidinol-phosphate aminotransferase (350 aa).

Lys-209 carries the N6-(pyridoxal phosphate)lysine modification.

This sequence belongs to the class-II pyridoxal-phosphate-dependent aminotransferase family. Histidinol-phosphate aminotransferase subfamily. In terms of assembly, homodimer. Pyridoxal 5'-phosphate serves as cofactor.

It catalyses the reaction L-histidinol phosphate + 2-oxoglutarate = 3-(imidazol-4-yl)-2-oxopropyl phosphate + L-glutamate. It functions in the pathway amino-acid biosynthesis; L-histidine biosynthesis; L-histidine from 5-phospho-alpha-D-ribose 1-diphosphate: step 7/9. The protein is Histidinol-phosphate aminotransferase of Christiangramia forsetii (strain DSM 17595 / CGMCC 1.15422 / KT0803) (Gramella forsetii).